A 265-amino-acid polypeptide reads, in one-letter code: Glutamate racemase (265 aa).

Residues 12–13 and 44–45 each bind substrate; these read DS and YG. C75 (proton donor/acceptor) is an active-site residue. A substrate-binding site is contributed by 76 to 77; the sequence is NT. Catalysis depends on C186, which acts as the Proton donor/acceptor. 187-188 is a substrate binding site; sequence TH.

Belongs to the aspartate/glutamate racemases family.

It carries out the reaction L-glutamate = D-glutamate. It participates in cell wall biogenesis; peptidoglycan biosynthesis. Its function is as follows. Provides the (R)-glutamate required for cell wall biosynthesis. This chain is Glutamate racemase, found in Pseudomonas putida (strain ATCC 47054 / DSM 6125 / CFBP 8728 / NCIMB 11950 / KT2440).